A 507-amino-acid polypeptide reads, in one-letter code: Wax ester synthase/diacylglycerol acyltransferase 5 (507 aa).

Residues 1 to 211 (MEIKIRRRRG…LKTSSRCYSR (211 aa)) are Cytoplasmic-facing. The Proton acceptor role is filled by His161. A helical transmembrane segment spans residues 212 to 232 (FFWLVMVLWSAALLVLNTVCD). The Lumenal portion of the chain corresponds to 233-507 (ALEFIATALF…VVVQERTSTQ (275 aa)). 2 N-linked (GlcNAc...) asparagine glycosylation sites follow: Asn314 and Asn421.

The protein in the N-terminal section; belongs to the long-chain O-acyltransferase family. Mostly expressed in flowers and siliques.

It localises to the cell membrane. Its subcellular location is the endoplasmic reticulum membrane. It catalyses the reaction a long chain fatty alcohol + a fatty acyl-CoA = a wax ester + CoA. The catalysed reaction is an acyl-CoA + a 1,2-diacyl-sn-glycerol = a triacyl-sn-glycerol + CoA. It functions in the pathway glycerolipid metabolism; triacylglycerol biosynthesis. It participates in lipid metabolism. Functionally, bifunctional wax ester synthase/diacylglycerol acyltransferase. Involved in cuticular wax biosynthesis. In Arabidopsis thaliana (Mouse-ear cress), this protein is Wax ester synthase/diacylglycerol acyltransferase 5.